Here is a 254-residue protein sequence, read N- to C-terminus: 3-deoxy-manno-octulosonate cytidylyltransferase (254 aa).

It belongs to the KdsB family.

The protein localises to the cytoplasm. It carries out the reaction 3-deoxy-alpha-D-manno-oct-2-ulosonate + CTP = CMP-3-deoxy-beta-D-manno-octulosonate + diphosphate. The protein operates within nucleotide-sugar biosynthesis; CMP-3-deoxy-D-manno-octulosonate biosynthesis; CMP-3-deoxy-D-manno-octulosonate from 3-deoxy-D-manno-octulosonate and CTP: step 1/1. It participates in bacterial outer membrane biogenesis; lipopolysaccharide biosynthesis. Activates KDO (a required 8-carbon sugar) for incorporation into bacterial lipopolysaccharide in Gram-negative bacteria. This is 3-deoxy-manno-octulosonate cytidylyltransferase from Haemophilus influenzae (strain ATCC 51907 / DSM 11121 / KW20 / Rd).